The primary structure comprises 273 residues: Bis(5'-nucleosyl)-tetraphosphatase, symmetrical (273 aa).

Belongs to the Ap4A hydrolase family.

The enzyme catalyses P(1),P(4)-bis(5'-adenosyl) tetraphosphate + H2O = 2 ADP + 2 H(+). Its function is as follows. Hydrolyzes diadenosine 5',5'''-P1,P4-tetraphosphate to yield ADP. In Proteus mirabilis (strain HI4320), this protein is Bis(5'-nucleosyl)-tetraphosphatase, symmetrical.